The sequence spans 619 residues: Zinc finger CCCH domain-containing protein 67 (619 aa).

ANK repeat units follow at residues 52–81 (EPLT…LVDP) and 88–120 (SLST…DPAL). 2 C3H1-type zinc fingers span residues 213–241 (HYSC…HGVF) and 249–273 (QYRT…HTPD). Residues 308-341 (SPGSSSFTPPLSPSAGGGGGGGGGSGGGGAWPQQ) form a disordered region. Positions 322 to 337 (AGGGGGGGGGSGGGGA) are enriched in gly residues.

The polypeptide is Zinc finger CCCH domain-containing protein 67 (Oryza sativa subsp. japonica (Rice)).